A 231-amino-acid chain; its full sequence is Putative N-acetylmannosamine-6-phosphate 2-epimerase (231 aa).

The protein belongs to the NanE family.

The enzyme catalyses an N-acyl-D-glucosamine 6-phosphate = an N-acyl-D-mannosamine 6-phosphate. It functions in the pathway amino-sugar metabolism; N-acetylneuraminate degradation; D-fructose 6-phosphate from N-acetylneuraminate: step 3/5. Functionally, converts N-acetylmannosamine-6-phosphate (ManNAc-6-P) to N-acetylglucosamine-6-phosphate (GlcNAc-6-P). The sequence is that of Putative N-acetylmannosamine-6-phosphate 2-epimerase from Latilactobacillus sakei subsp. sakei (strain 23K) (Lactobacillus sakei subsp. sakei).